The sequence spans 100 residues: MKKIVLLIVSLAAFAFGADGEMIRSYSVIAAGIGLGLAALGGAIGMGNTAAATISGTARNPGVGSKLMTTMFIALAMIEAQVIYALVITLIVLYANPMLG.

Helical transmembrane passes span 27 to 47 (SVIAAGIGLGLAALGGAIGMG) and 72 to 92 (FIALAMIEAQVIYALVITLIV).

Belongs to the ATPase C chain family. In terms of assembly, F-type ATPases have 2 components, F(1) - the catalytic core - and F(0) - the membrane proton channel. F(1) has five subunits: alpha(3), beta(3), gamma(1), delta(1), epsilon(1). F(0) has three main subunits: a(1), b(2) and c(10-14). The alpha and beta chains form an alternating ring which encloses part of the gamma chain. F(1) is attached to F(0) by a central stalk formed by the gamma and epsilon chains, while a peripheral stalk is formed by the delta and b chains.

The protein resides in the cell inner membrane. Its function is as follows. F(1)F(0) ATP synthase produces ATP from ADP in the presence of a proton or sodium gradient. F-type ATPases consist of two structural domains, F(1) containing the extramembraneous catalytic core and F(0) containing the membrane proton channel, linked together by a central stalk and a peripheral stalk. During catalysis, ATP synthesis in the catalytic domain of F(1) is coupled via a rotary mechanism of the central stalk subunits to proton translocation. The protein is ATP synthase subunit c of Campylobacter curvus (strain 525.92).